A 137-amino-acid polypeptide reads, in one-letter code: Small ribosomal subunit protein uS11 (137 aa).

Residues E116–V137 are disordered.

The protein belongs to the universal ribosomal protein uS11 family. In terms of assembly, part of the 30S ribosomal subunit.

In terms of biological role, located on the platform of the 30S subunit. This is Small ribosomal subunit protein uS11 from Pyrococcus abyssi (strain GE5 / Orsay).